The chain runs to 236 residues: tRNA1(Val) (adenine(37)-N6)-methyltransferase (236 aa).

It belongs to the methyltransferase superfamily. tRNA (adenine-N(6)-)-methyltransferase family.

The protein localises to the cytoplasm. The enzyme catalyses adenosine(37) in tRNA1(Val) + S-adenosyl-L-methionine = N(6)-methyladenosine(37) in tRNA1(Val) + S-adenosyl-L-homocysteine + H(+). Its function is as follows. Specifically methylates the adenine in position 37 of tRNA(1)(Val) (anticodon cmo5UAC). The protein is tRNA1(Val) (adenine(37)-N6)-methyltransferase of Shewanella sp. (strain MR-7).